The primary structure comprises 229 residues: Non-structural protein P8 (229 aa).

2 consecutive transmembrane segments (helical) span residues 119–139 (IIHM…VCTL) and 162–182 (SLNP…MVCA).

This sequence belongs to the orbivirus NS3 family. As to quaternary structure, forms homooligomers via coiled-coil motif. Interacts with host OPTN; this interaction inhibits innate immune response.

It is found in the host cell membrane. The protein resides in the host Golgi apparatus. Plays a role in the inhibition of host innate immune response. Interacts with host OPTN and thus inhibits the recruitment of TBK1 to the host Golgi apparatus. In turn, downstream partner IRF3 cannot be activated and IFN-beta production is impaired. Its function is as follows. Facilitates viral particle release either by increasing plasma membrane permeability through a viroporin-like activity or by viral budding. The chain is Non-structural protein P8 (Segment-10) from Bluetongue virus 17 (isolate USA) (BTV 17).